A 207-amino-acid polypeptide reads, in one-letter code: Guanylate kinase (207 aa).

Residues 5–183 (GTLYIISAPS…ALYELEAIVE (179 aa)) form the Guanylate kinase-like domain. Position 12–19 (12–19 (APSGAGKT)) interacts with ATP.

This sequence belongs to the guanylate kinase family.

It is found in the cytoplasm. It carries out the reaction GMP + ATP = GDP + ADP. Its function is as follows. Essential for recycling GMP and indirectly, cGMP. The sequence is that of Guanylate kinase from Alcanivorax borkumensis (strain ATCC 700651 / DSM 11573 / NCIMB 13689 / SK2).